Here is a 1158-residue protein sequence, read N- to C-terminus: ATP-dependent helicase/deoxyribonuclease subunit B (1158 aa).

8-15 (GRAGTGKS) provides a ligand contact to ATP. [4Fe-4S] cluster is bound by residues Cys791, Cys1112, Cys1115, and Cys1121.

Belongs to the helicase family. AddB/RexB type 1 subfamily. In terms of assembly, heterodimer of AddA and AddB. The cofactor is Mg(2+). Requires [4Fe-4S] cluster as cofactor.

The heterodimer acts as both an ATP-dependent DNA helicase and an ATP-dependent, dual-direction single-stranded exonuclease. Recognizes the chi site generating a DNA molecule suitable for the initiation of homologous recombination. The AddB subunit has 5' -&gt; 3' nuclease activity but not helicase activity. The polypeptide is ATP-dependent helicase/deoxyribonuclease subunit B (Clostridium perfringens (strain ATCC 13124 / DSM 756 / JCM 1290 / NCIMB 6125 / NCTC 8237 / Type A)).